The sequence spans 315 residues: Probable mannose-6-phosphate isomerase GmuF (315 aa).

Zn(2+) is bound by residues glutamine 95, histidine 97, glutamate 115, and histidine 172. Residue arginine 192 is part of the active site.

This sequence belongs to the mannose-6-phosphate isomerase type 1 family. It depends on Zn(2+) as a cofactor.

The catalysed reaction is D-mannose 6-phosphate = D-fructose 6-phosphate. In terms of biological role, seems to be involved in the degradation of glucomannan. The protein is Probable mannose-6-phosphate isomerase GmuF (gmuF) of Bacillus subtilis (strain 168).